Here is a 657-residue protein sequence, read N- to C-terminus: MLNQNNQELFKPSKEFSRNARIKNLCEYYDLCDEAKEDFEGFWKRQAFEKIEWFSPFSRVLNEDKAPFYKWFEGGTLNVSYQCLDRHMKTRRNKAALIFEGEMGDYEVYTYRRLLHETCKAANLLKKFGVKKGDRVVIYMPMIPETAIVMLACARIGAIHSVVFGGFSPEALRDRIIDAGAKLVVTADGAFRRGKPYMLKPAVDKALSEGCESVEKVLIVIRNNEPIEYIKGRDYVYNELVKNESYKCEPEIMDSEDLLFLLYTSGSTGKPKGVMHASAGYILWAQMTMEWVFDIKDYDNYWCSADVGWITGHTYVVYGPLACGATTIMHEGTPTYPNSGRWWRMIEEYQISKFYTSPTAIRMLHADAPNEPRKYDLSTLEVLGTVGEPINPSAWKWFYDEIGGTKSPIVDTWWQTETGGHMITPLPGATPLKPGCATLPLPGIFAEVIDEEGNKKDEGEDGLLCITKPWPSMIRGIWGNDERYIESYFSQAKKDGKAVYFSGDGAFYDKNGYITITGRTDDVVNVAGHRIGTAEIESAIAKHPSVAESAVVSILDTIKGESLFAFVVLSPASSCDLGGAIETLKELNDILRVEIGPIAKIEKILYTPGLPKTRSGKIMRRILRTIARGEEIKQDISTLEDSKVVETIVKLAKAEFE.

CoA contacts are provided by residues 192–195 (RRGK) and Thr-311. Residues 387–389 (GEP), 411–416 (DTWWQT), Asp-504, Arg-519, and Arg-530 each bind ATP. Mg(2+) is bound by residues His-543 and Val-546. Arg-592 is a binding site for CoA. Lys-617 carries the post-translational modification N6-acetyllysine.

The protein belongs to the ATP-dependent AMP-binding enzyme family. The cofactor is Mg(2+). Acetylated. Deacetylation by the SIR2-homolog deacetylase activates the enzyme.

It carries out the reaction acetate + ATP + CoA = acetyl-CoA + AMP + diphosphate. Its function is as follows. Catalyzes the conversion of acetate into acetyl-CoA (AcCoA), an essential intermediate at the junction of anabolic and catabolic pathways. AcsA undergoes a two-step reaction. In the first half reaction, AcsA combines acetate with ATP to form acetyl-adenylate (AcAMP) intermediate. In the second half reaction, it can then transfer the acetyl group from AcAMP to the sulfhydryl group of CoA, forming the product AcCoA. This chain is Acetyl-coenzyme A synthetase, found in Campylobacter jejuni subsp. jejuni serotype O:2 (strain ATCC 700819 / NCTC 11168).